The primary structure comprises 77 residues: Protein UL148C (77 aa).

Transmembrane regions (helical) follow at residues 10-30 and 35-55; these read VLYL…AVAV and IAWA…VGAA.

Its subcellular location is the host membrane. This is Protein UL148C (UL148C) from Homo sapiens (Human).